Here is a 221-residue protein sequence, read N- to C-terminus: Histone H1C (221 aa).

Composition is skewed to low complexity over residues 1-11 (MTETAATETTP) and 27-44 (KKAAGGAKAKKPSGPSAS). 2 disordered regions span residues 1-44 (MTET…PSAS) and 123-221 (AKKK…AAKK). Residues 39 to 112 (SGPSASELIV…GASGSFKLNK (74 aa)) form the H15 domain. 2 stretches are compositionally biased toward basic residues: residues 123-150 (AKKKLVAPKAKKPVAAKKKPKSPKKPKK) and 158-221 (SPKK…AAKK).

This sequence belongs to the histone H1/H5 family.

Its subcellular location is the nucleus. The protein resides in the chromosome. Functionally, histones H1 are necessary for the condensation of nucleosome chains into higher-order structures. This chain is Histone H1C, found in Xenopus laevis (African clawed frog).